A 191-amino-acid chain; its full sequence is uncharacterized protein (191 aa).

Residues Gly-6–Leu-66 enclose the HTH tetR-type domain. Positions Ser-29–Ile-48 form a DNA-binding region, H-T-H motif.

This is an uncharacterized protein from Bacillus subtilis (strain 168).